The sequence spans 829 residues: Cadherin-16 (829 aa).

Positions 1–18 are cleaved as a signal peptide; sequence MVPAWLWLLCFSVPQALV. Over 19 to 786 the chain is Extracellular; it reads EVSPTTLHVE…MKGMPTKLSA (768 aa). Cadherin domains are found at residues 25 to 126, 131 to 235, 242 to 336, 341 to 449, 455 to 564, and 569 to 665; these read LHVE…VPQF, YSAR…SIVE, EPVH…APVC, PPVS…APEF, GPVS…PPRL, and YEAD…APAL. Asn-517, Asn-602, and Asn-722 each carry an N-linked (GlcNAc...) asparagine glycan. The interval 666-786 is ectodomain G; sequence PLAPMPSRHL…MKGMPTKLSA (121 aa). The helical transmembrane segment at 787–807 threads the bilayer; it reads VGILVGTLAAIGFFLILIFTH. At 808–829 the chain is on the cytoplasmic side; sequence LALARKKDLDAPADNVPLKAAA.

In terms of tissue distribution, kidney specific. Limited to the basolateral membranes of renal tubular epithelial cells.

Its subcellular location is the cell membrane. Its function is as follows. Cadherins are calcium-dependent cell adhesion proteins. They preferentially interact with themselves in a homophilic manner in connecting cells; cadherins may thus contribute to the sorting of heterogeneous cell types. The polypeptide is Cadherin-16 (CDH16) (Oryctolagus cuniculus (Rabbit)).